We begin with the raw amino-acid sequence, 194 residues long: Small ribosomal subunit protein uS4 (194 aa).

K66 carries the post-translational modification N6-acetyllysine. Residue K93 forms a Glycyl lysine isopeptide (Lys-Gly) (interchain with G-Cter in SUMO2) linkage. Residues 108–182 (RRLQTQVFKL…VKRKNAKKGQ (75 aa)) form the S4 RNA-binding domain. K116 is modified (N6-acetyllysine). A Glycyl lysine isopeptide (Lys-Gly) (interchain with G-Cter in SUMO2) cross-link involves residue K139. S153 carries the post-translational modification Phosphoserine. N6-acetyllysine is present on K155. Residues 162–194 (RSPYGGGRPGRVKRKNAKKGQGGAGAGDDEEED) form a disordered region. Position 163 is a phosphoserine (S163).

Belongs to the universal ribosomal protein uS4 family. In terms of assembly, component of the small ribosomal subunit. Part of the small subunit (SSU) processome, composed of more than 70 proteins and the RNA chaperone small nucleolar RNA (snoRNA) U3.

The protein localises to the cytoplasm. It is found in the nucleus. Its subcellular location is the nucleolus. In terms of biological role, component of the small ribosomal subunit. The ribosome is a large ribonucleoprotein complex responsible for the synthesis of proteins in the cell. Part of the small subunit (SSU) processome, first precursor of the small eukaryotic ribosomal subunit. During the assembly of the SSU processome in the nucleolus, many ribosome biogenesis factors, an RNA chaperone and ribosomal proteins associate with the nascent pre-rRNA and work in concert to generate RNA folding, modifications, rearrangements and cleavage as well as targeted degradation of pre-ribosomal RNA by the RNA exosome. The protein is Small ribosomal subunit protein uS4 (RPS9) of Papio anubis (Olive baboon).